The sequence spans 315 residues: Ribosomal RNA small subunit methyltransferase H (315 aa).

S-adenosyl-L-methionine-binding positions include 32-34 (GGH), Asp-52, Phe-78, Asp-100, and Gln-107.

The protein belongs to the methyltransferase superfamily. RsmH family.

The protein resides in the cytoplasm. It carries out the reaction cytidine(1402) in 16S rRNA + S-adenosyl-L-methionine = N(4)-methylcytidine(1402) in 16S rRNA + S-adenosyl-L-homocysteine + H(+). Specifically methylates the N4 position of cytidine in position 1402 (C1402) of 16S rRNA. In Psychromonas ingrahamii (strain DSM 17664 / CCUG 51855 / 37), this protein is Ribosomal RNA small subunit methyltransferase H.